The sequence spans 127 residues: Secreted RxLR effector protein 7 (127 aa).

The signal sequence occupies residues 1 to 21; that stretch reads MRSAYYVLTALLVVASSQVAA. The short motif at 48–65 is the RxLR-dEER element; that stretch reads RFLRESRDVHGNVANEER.

This sequence belongs to the RxLR effector family.

It localises to the secreted. It is found in the host nucleus. The protein resides in the host cytoplasm. Its function is as follows. Secreted effector that completely suppresses the host cell death induced by cell death-inducing proteins. This is Secreted RxLR effector protein 7 from Plasmopara viticola (Downy mildew of grapevine).